A 278-amino-acid chain; its full sequence is Pantothenate synthetase (278 aa).

31–38 (MGALHEGH) serves as a coordination point for ATP. His-38 functions as the Proton donor in the catalytic mechanism. Residue Gln-62 participates in (R)-pantoate binding. Gln-62 serves as a coordination point for beta-alanine. Residue 148-151 (GEKD) coordinates ATP. Gln-154 is a binding site for (R)-pantoate. Residues Leu-177 and 185–188 (MSSR) each bind ATP.

This sequence belongs to the pantothenate synthetase family. As to quaternary structure, homodimer.

It localises to the cytoplasm. It carries out the reaction (R)-pantoate + beta-alanine + ATP = (R)-pantothenate + AMP + diphosphate + H(+). It functions in the pathway cofactor biosynthesis; (R)-pantothenate biosynthesis; (R)-pantothenate from (R)-pantoate and beta-alanine: step 1/1. Functionally, catalyzes the condensation of pantoate with beta-alanine in an ATP-dependent reaction via a pantoyl-adenylate intermediate. The sequence is that of Pantothenate synthetase from Acidiphilium cryptum (strain JF-5).